The primary structure comprises 404 residues: Tryptophan synthase beta chain (404 aa).

N6-(pyridoxal phosphate)lysine is present on lysine 98.

The protein belongs to the TrpB family. As to quaternary structure, tetramer of two alpha and two beta chains. Requires pyridoxal 5'-phosphate as cofactor.

It carries out the reaction (1S,2R)-1-C-(indol-3-yl)glycerol 3-phosphate + L-serine = D-glyceraldehyde 3-phosphate + L-tryptophan + H2O. It participates in amino-acid biosynthesis; L-tryptophan biosynthesis; L-tryptophan from chorismate: step 5/5. In terms of biological role, the beta subunit is responsible for the synthesis of L-tryptophan from indole and L-serine. The chain is Tryptophan synthase beta chain from Rhodopseudomonas palustris (strain BisB18).